Consider the following 448-residue polypeptide: UDP-N-acetylmuramoylalanine--D-glutamate ligase (448 aa).

Residue 116–122 (GSNAKST) coordinates ATP.

Belongs to the MurCDEF family.

The protein localises to the cytoplasm. It carries out the reaction UDP-N-acetyl-alpha-D-muramoyl-L-alanine + D-glutamate + ATP = UDP-N-acetyl-alpha-D-muramoyl-L-alanyl-D-glutamate + ADP + phosphate + H(+). The protein operates within cell wall biogenesis; peptidoglycan biosynthesis. Its function is as follows. Cell wall formation. Catalyzes the addition of glutamate to the nucleotide precursor UDP-N-acetylmuramoyl-L-alanine (UMA). This Pseudomonas syringae pv. tomato (strain ATCC BAA-871 / DC3000) protein is UDP-N-acetylmuramoylalanine--D-glutamate ligase.